The following is a 127-amino-acid chain: DNA-directed RNA polymerase subunit omega (127 aa).

It belongs to the RNA polymerase subunit omega family. In terms of assembly, the RNAP catalytic core consists of 2 alpha, 1 beta, 1 beta' and 1 omega subunit. When a sigma factor is associated with the core the holoenzyme is formed, which can initiate transcription.

It catalyses the reaction RNA(n) + a ribonucleoside 5'-triphosphate = RNA(n+1) + diphosphate. Promotes RNA polymerase assembly. Latches the N- and C-terminal regions of the beta' subunit thereby facilitating its interaction with the beta and alpha subunits. This Rickettsia rickettsii (strain Iowa) protein is DNA-directed RNA polymerase subunit omega.